A 21-amino-acid chain; its full sequence is thr operon leader peptide (21 aa).

The protein belongs to the thr operon leader peptide family.

In terms of biological role, this protein is involved in control of the biosynthesis of threonine. In Salmonella choleraesuis (strain SC-B67), this protein is thr operon leader peptide.